A 203-amino-acid polypeptide reads, in one-letter code: Outer-membrane lipoprotein LolB (203 aa).

Positions 1–21 are cleaved as a signal peptide; the sequence is MRLSASLFHIALVTVLLVLAG. The N-palmitoyl cysteine moiety is linked to residue Cys22. Residue Cys22 is the site of S-diacylglycerol cysteine attachment.

Belongs to the LolB family. In terms of assembly, monomer.

It localises to the cell outer membrane. Its function is as follows. Plays a critical role in the incorporation of lipoproteins in the outer membrane after they are released by the LolA protein. In Shewanella frigidimarina (strain NCIMB 400), this protein is Outer-membrane lipoprotein LolB.